Reading from the N-terminus, the 312-residue chain is Tumor necrosis factor receptor type 1-associated DEATH domain protein (312 aa).

The Nuclear export signal motif lies at 147–163 (LRDEELAELEDALRNLK). A disordered region spans residues 170-195 (GGDGEVASAPLQPPVPSLSEVKPPPP). One can recognise a Death domain in the interval 179-289 (PLQPPVPSLS…ATLQRLVEAL (111 aa)). Positions 180 to 195 (LQPPVPSLSEVKPPPP) are enriched in pro residues. An interaction with KRT14 and KRT18 region spans residues 222-289 (FARSVGLKWR…ATLQRLVEAL (68 aa)). Residues 231–244 (RKVGRSLQRGCRAL) carry the Nuclear localization signal motif. 2 (Microbial infection) N-beta-linked (GlcNAc) arginine glycosylation sites follow: Arg-235 and Arg-245.

In terms of assembly, stimulation of TNF-alpha receptor TNFRSF1A leads to the formation of two distinct signaling complexes. Plasma membrane-bound complex I is composed of TNFRSF1A, TRADD, RIPK1, TRAF2 and BIRC2/c-IAP1 or BIRC3 which interacts with CHUCK/IKK-alpha, IKBKB/IKK-beta and IKBKG/IKK-gamma promoting cell survival. Subsequently, TRADD, RIPK1 and TRAF2 dissociate from TNFRSF1A and form cytoplasmic complex II with FADD and caspase CASP8 promoting cell apoptosis. Within complex I, interacts with TNFRSF1A/TNFR1, TRAF2 and kinase RIPK1. Within complex I, interacts with TRPC4AP; the interaction promotes NF-kappa B activation. UXT1 associates with complex I; the interaction prevents the formation of complex II. Within complex I Interacts with scaffold protein DAB2IP. Interacts with autophagy receptor SQSTM1. Interacts with E3 ligase TRIP12. Interacts with kinase HIPK2. Interacts with keratin KRT14. Interacts with keratin KRT18. Interacts with keratins KRT16 and KRT17. Interacts with FADD. Interacts with TOMM70. Interacts with TMC8; the interaction impairs the formation of complex I and facilites complex II formation. In terms of processing, (Microbial infection) Glycosylated at Arg-235 by enteropathogenic E.coli protein NleB1, C.rodentium protein NleB and S.typhimurium proteins Ssek1 and Ssek3: arginine GlcNAcylation prevents homotypic/heterotypic death domain interactions and assembly of the oligomeric TNFRSF1A/TNFR1 complex, thereby disrupting TNF signaling. As to expression, found in all examined tissues.

The protein localises to the nucleus. Its subcellular location is the cytoplasm. It localises to the cytoskeleton. Adapter molecule for TNFRSF1A/TNFR1 that specifically associates with the cytoplasmic domain of activated TNFRSF1A/TNFR1 mediating its interaction with FADD. Overexpression of TRADD leads to two major TNF-induced responses, apoptosis and activation of NF-kappa-B. The nuclear form acts as a tumor suppressor by preventing ubiquitination and degradation of isoform p19ARF/ARF of CDKN2A by TRIP12: acts by interacting with TRIP12, leading to disrupt interaction between TRIP12 and isoform p19ARF/ARF of CDKN2A. This is Tumor necrosis factor receptor type 1-associated DEATH domain protein from Homo sapiens (Human).